Here is a 176-residue protein sequence, read N- to C-terminus: Protein GrpE (176 aa).

The disordered stretch occupies residues 1-31; that stretch reads MSEQKQEFENENAENSEHLQDENLQNIEDVE.

The protein belongs to the GrpE family. Homodimer.

It localises to the cytoplasm. Its function is as follows. Participates actively in the response to hyperosmotic and heat shock by preventing the aggregation of stress-denatured proteins, in association with DnaK and GrpE. It is the nucleotide exchange factor for DnaK and may function as a thermosensor. Unfolded proteins bind initially to DnaJ; upon interaction with the DnaJ-bound protein, DnaK hydrolyzes its bound ATP, resulting in the formation of a stable complex. GrpE releases ADP from DnaK; ATP binding to DnaK triggers the release of the substrate protein, thus completing the reaction cycle. Several rounds of ATP-dependent interactions between DnaJ, DnaK and GrpE are required for fully efficient folding. The sequence is that of Protein GrpE from Campylobacter jejuni subsp. doylei (strain ATCC BAA-1458 / RM4099 / 269.97).